A 274-amino-acid chain; its full sequence is Orotidine 5'-phosphate decarboxylase (274 aa).

Over residues 1-15 (MSAGRRSSGGRSAAA) the composition is skewed to low complexity. A disordered region spans residues 1–21 (MSAGRRSSGGRSAAAPRFTPP). Substrate-binding positions include D32, K54, 99-108 (DLKLHDIPAT), T154, R215, Q224, G244, and R245. Catalysis depends on K101, which acts as the Proton donor.

Belongs to the OMP decarboxylase family. Type 1 subfamily. As to quaternary structure, homodimer.

It catalyses the reaction orotidine 5'-phosphate + H(+) = UMP + CO2. It participates in pyrimidine metabolism; UMP biosynthesis via de novo pathway; UMP from orotate: step 2/2. In terms of biological role, catalyzes the decarboxylation of orotidine 5'-monophosphate (OMP) to uridine 5'-monophosphate (UMP). This Frankia casuarinae (strain DSM 45818 / CECT 9043 / HFP020203 / CcI3) protein is Orotidine 5'-phosphate decarboxylase.